The primary structure comprises 784 residues: Kinesin-like protein 6 (784 aa).

The Kinesin motor domain maps to S6–I389. G134–T141 is a binding site for ATP. Coiled coils occupy residues S405–K440 and R463–I483. The tract at residues S677–L715 is disordered. Residues I690–N709 are compositionally biased toward basic and acidic residues.

This sequence belongs to the TRAFAC class myosin-kinesin ATPase superfamily. Kinesin family. Kinesin II subfamily. As to quaternary structure, heterodimer with klp5.

It localises to the cytoplasm. Its subcellular location is the cytoskeleton. The protein resides in the chromosome. It is found in the centromere. The protein localises to the kinetochore. It localises to the spindle. Has a role in establishing metaphase during mitosis. Required for chromosome segregation where it generates tension during kinetochore capturing. The protein is Kinesin-like protein 6 (klp6) of Schizosaccharomyces pombe (strain 972 / ATCC 24843) (Fission yeast).